Here is an 878-residue protein sequence, read N- to C-terminus: Phosphoenolpyruvate carboxylase (878 aa).

Residues His140 and Lys545 contribute to the active site.

Belongs to the PEPCase type 1 family. Requires Mg(2+) as cofactor.

It carries out the reaction oxaloacetate + phosphate = phosphoenolpyruvate + hydrogencarbonate. Functionally, forms oxaloacetate, a four-carbon dicarboxylic acid source for the tricarboxylic acid cycle. The sequence is that of Phosphoenolpyruvate carboxylase from Ectopseudomonas mendocina (strain ymp) (Pseudomonas mendocina).